The following is a 364-amino-acid chain: Protein IncC (364 aa).

3 stretches are compositionally biased toward basic and acidic residues: residues 1 to 10 (MGVIHEETAY), 26 to 42 (ADHR…EATG), and 89 to 100 (HRPEVGSGRQEK). 2 disordered regions span residues 1–63 (MGVI…ASRV) and 75–102 (VRAG…EKTG).

The protein belongs to the ParA family.

In terms of biological role, this is one of the proteins encoded by the trfB operon; it is involved in plasmid maintenance and replication. The protein is Protein IncC (incC) of Escherichia coli.